The primary structure comprises 333 residues: Holliday junction branch migration complex subunit RuvB (333 aa).

The segment at 1–182 is large ATPase domain (RuvB-L); the sequence is MDERLLSGES…FGVLSRLEYY (182 aa). Residues leucine 21, arginine 22, glycine 63, lysine 66, threonine 67, threonine 68, 129–131, arginine 172, tyrosine 182, and arginine 219 contribute to the ATP site; that span reads EDF. Threonine 67 serves as a coordination point for Mg(2+). The tract at residues 183-253 is small ATPAse domain (RuvB-S); it reads TVDQLSAIVE…ITQMALELLQ (71 aa). Residues 256–333 form a head domain (RuvB-H) region; the sequence is KLGLDHIDHK…EHFGMEMPKV (78 aa). The DNA site is built by arginine 311 and arginine 316.

Belongs to the RuvB family. In terms of assembly, homohexamer. Forms an RuvA(8)-RuvB(12)-Holliday junction (HJ) complex. HJ DNA is sandwiched between 2 RuvA tetramers; dsDNA enters through RuvA and exits via RuvB. An RuvB hexamer assembles on each DNA strand where it exits the tetramer. Each RuvB hexamer is contacted by two RuvA subunits (via domain III) on 2 adjacent RuvB subunits; this complex drives branch migration. In the full resolvosome a probable DNA-RuvA(4)-RuvB(12)-RuvC(2) complex forms which resolves the HJ.

Its subcellular location is the cytoplasm. The catalysed reaction is ATP + H2O = ADP + phosphate + H(+). Functionally, the RuvA-RuvB-RuvC complex processes Holliday junction (HJ) DNA during genetic recombination and DNA repair, while the RuvA-RuvB complex plays an important role in the rescue of blocked DNA replication forks via replication fork reversal (RFR). RuvA specifically binds to HJ cruciform DNA, conferring on it an open structure. The RuvB hexamer acts as an ATP-dependent pump, pulling dsDNA into and through the RuvAB complex. RuvB forms 2 homohexamers on either side of HJ DNA bound by 1 or 2 RuvA tetramers; 4 subunits per hexamer contact DNA at a time. Coordinated motions by a converter formed by DNA-disengaged RuvB subunits stimulates ATP hydrolysis and nucleotide exchange. Immobilization of the converter enables RuvB to convert the ATP-contained energy into a lever motion, pulling 2 nucleotides of DNA out of the RuvA tetramer per ATP hydrolyzed, thus driving DNA branch migration. The RuvB motors rotate together with the DNA substrate, which together with the progressing nucleotide cycle form the mechanistic basis for DNA recombination by continuous HJ branch migration. Branch migration allows RuvC to scan DNA until it finds its consensus sequence, where it cleaves and resolves cruciform DNA. The protein is Holliday junction branch migration complex subunit RuvB of Bacillus mycoides (strain KBAB4) (Bacillus weihenstephanensis).